Here is a 50-residue protein sequence, read N- to C-terminus: Ampulexin 1 (50 aa).

The signal sequence occupies residues 1–26 (MKAIMVLFYVMMLTIIASVSMVNGSP).

Monomer. Expressed in venom sac and, to a lesser extent, in venom gland. Not expressed in brain.

It is found in the secreted. Its function is as follows. Amphipathic peptide which probably adopts an alpha-helical structure. When injected in subesophageal ganglia of cockroach P.americana, a natural host for larvae of A.compressa, dampens the escape response for about 1 hour which may contribute to early stages of hypokinesia. Has no antimicrobial activity against E.coli DH5alpha or B.thuringiensis. Is not cytotoxic in vitro. The sequence is that of Ampulexin 1 from Ampulex compressa (Emerald cockroach wasp).